A 305-amino-acid polypeptide reads, in one-letter code: MLWAQRKKRKATTETTEDKPAESHRPNDSWIKSHFSRLSEEKLPAYRRVSSCGYSPEGKHGEANTTLHVDTVTTKHGEGGVALHRDSFASKQKISGTSVSKEMQRESGKSPSMENDTWAAVAACTKEIDAKGHHVANSVLQRSPEYHRTGHAESRNISPEDLKALEEVELKLKGNFLTHRETVVAGANQAHTVYNQSHHGNQSHQNHNTYPCHQNNQSRSVHYQGHHPSHLSHQGYPSYSSHQNHPGHPSQQGHSSHSNQQGHLGLSSQQGHPSQSSHQSHQGQPGHPNHQSHSLVNRRNQIYDS.

Over residues 1–10 (MLWAQRKKRK) the composition is skewed to basic residues. The interval 1–30 (MLWAQRKKRKATTETTEDKPAESHRPNDSW) is disordered. Over residues 16–27 (TEDKPAESHRPN) the composition is skewed to basic and acidic residues. Residue serine 39 is modified to Phosphoserine. Polar residues predominate over residues 92 to 101 (QKISGTSVSK). The segment at 92–114 (QKISGTSVSKEMQRESGKSPSME) is disordered. Position 158 is a phosphoserine (serine 158). Low complexity predominate over residues 197-208 (SHHGNQSHQNHN). The disordered stretch occupies residues 197–305 (SHHGNQSHQN…VNRRNQIYDS (109 aa)). Composition is skewed to polar residues over residues 209–221 (TYPCHQNNQSRSV) and 231–244 (LSHQGYPSYSSHQN). The segment covering 247-293 (GHPSQQGHSSHSNQQGHLGLSSQQGHPSQSSHQSHQGQPGHPNHQSH) has biased composition (low complexity). The span at 294–305 (SLVNRRNQIYDS) shows a compositional bias: polar residues.

This is an uncharacterized protein from Rattus norvegicus (Rat).